Reading from the N-terminus, the 339-residue chain is F-box protein At3g22700 (339 aa).

One can recognise an F-box domain in the interval Met-1 to Ala-49.

The chain is F-box protein At3g22700 from Arabidopsis thaliana (Mouse-ear cress).